The sequence spans 301 residues: Acetylglutamate kinase (301 aa).

Substrate is bound by residues 64-65 (GG), arginine 86, and asparagine 181.

The protein belongs to the acetylglutamate kinase family. ArgB subfamily.

Its subcellular location is the cytoplasm. It carries out the reaction N-acetyl-L-glutamate + ATP = N-acetyl-L-glutamyl 5-phosphate + ADP. It functions in the pathway amino-acid biosynthesis; L-arginine biosynthesis; N(2)-acetyl-L-ornithine from L-glutamate: step 2/4. Functionally, catalyzes the ATP-dependent phosphorylation of N-acetyl-L-glutamate. This is Acetylglutamate kinase from Aliarcobacter butzleri (strain RM4018) (Arcobacter butzleri).